Reading from the N-terminus, the 202-residue chain is Imidazoleglycerol-phosphate dehydratase (202 aa).

It belongs to the imidazoleglycerol-phosphate dehydratase family.

Its subcellular location is the cytoplasm. The enzyme catalyses D-erythro-1-(imidazol-4-yl)glycerol 3-phosphate = 3-(imidazol-4-yl)-2-oxopropyl phosphate + H2O. It participates in amino-acid biosynthesis; L-histidine biosynthesis; L-histidine from 5-phospho-alpha-D-ribose 1-diphosphate: step 6/9. In Acinetobacter baylyi (strain ATCC 33305 / BD413 / ADP1), this protein is Imidazoleglycerol-phosphate dehydratase.